The chain runs to 305 residues: Methionyl-tRNA formyltransferase (305 aa).

A (6S)-5,6,7,8-tetrahydrofolate-binding site is contributed by 111 to 114 (SLLP).

It belongs to the Fmt family.

It carries out the reaction L-methionyl-tRNA(fMet) + (6R)-10-formyltetrahydrofolate = N-formyl-L-methionyl-tRNA(fMet) + (6S)-5,6,7,8-tetrahydrofolate + H(+). Its function is as follows. Attaches a formyl group to the free amino group of methionyl-tRNA(fMet). The formyl group appears to play a dual role in the initiator identity of N-formylmethionyl-tRNA by promoting its recognition by IF2 and preventing the misappropriation of this tRNA by the elongation apparatus. This chain is Methionyl-tRNA formyltransferase, found in Helicobacter pylori (strain J99 / ATCC 700824) (Campylobacter pylori J99).